The chain runs to 237 residues: 1-(5-phosphoribosyl)-5-[(5-phosphoribosylamino)methylideneamino] imidazole-4-carboxamide isomerase (237 aa).

Asp-8 functions as the Proton acceptor in the catalytic mechanism. Asp-129 acts as the Proton donor in catalysis.

It belongs to the HisA/HisF family.

It localises to the cytoplasm. It catalyses the reaction 1-(5-phospho-beta-D-ribosyl)-5-[(5-phospho-beta-D-ribosylamino)methylideneamino]imidazole-4-carboxamide = 5-[(5-phospho-1-deoxy-D-ribulos-1-ylimino)methylamino]-1-(5-phospho-beta-D-ribosyl)imidazole-4-carboxamide. Its pathway is amino-acid biosynthesis; L-histidine biosynthesis; L-histidine from 5-phospho-alpha-D-ribose 1-diphosphate: step 4/9. In Roseiflexus castenholzii (strain DSM 13941 / HLO8), this protein is 1-(5-phosphoribosyl)-5-[(5-phosphoribosylamino)methylideneamino] imidazole-4-carboxamide isomerase.